The following is a 238-amino-acid chain: uncharacterized protein (238 aa).

The protein belongs to the chlamydial CPn_0658/CT_538/TC_0825 family.

This is an uncharacterized protein from Chlamydia muridarum (strain MoPn / Nigg).